We begin with the raw amino-acid sequence, 74 residues long: Conotoxin AbVIA (74 aa).

Residues 1 to 17 form the signal peptide; the sequence is VLIIAVLFLTACQLTTA. Positions 18–38 are excised as a propeptide; that stretch reads VTSSRGEQKHRALRSTDKKFK. 3 disulfide bridges follow: Cys-43/Cys-57, Cys-50/Cys-61, and Cys-56/Cys-68. Serine amide is present on Ser-73.

Belongs to the conotoxin O1 superfamily. As to expression, expressed by the venom duct.

It is found in the secreted. In Conus abbreviatus (Abbreviated cone), this protein is Conotoxin AbVIA.